The following is a 519-amino-acid chain: Exodeoxyribonuclease 7 large subunit (519 aa).

The interval 500–519 (VGRGKTRKPKEEPPAQGSLL) is disordered.

The protein belongs to the XseA family. In terms of assembly, heterooligomer composed of large and small subunits.

The protein localises to the cytoplasm. The enzyme catalyses Exonucleolytic cleavage in either 5'- to 3'- or 3'- to 5'-direction to yield nucleoside 5'-phosphates.. Bidirectionally degrades single-stranded DNA into large acid-insoluble oligonucleotides, which are then degraded further into small acid-soluble oligonucleotides. The protein is Exodeoxyribonuclease 7 large subunit of Cereibacter sphaeroides (strain ATCC 17023 / DSM 158 / JCM 6121 / CCUG 31486 / LMG 2827 / NBRC 12203 / NCIMB 8253 / ATH 2.4.1.) (Rhodobacter sphaeroides).